We begin with the raw amino-acid sequence, 343 residues long: Ribosomal RNA small subunit methyltransferase C (343 aa).

The protein belongs to the methyltransferase superfamily. RsmC family. In terms of assembly, monomer.

It localises to the cytoplasm. It carries out the reaction guanosine(1207) in 16S rRNA + S-adenosyl-L-methionine = N(2)-methylguanosine(1207) in 16S rRNA + S-adenosyl-L-homocysteine + H(+). Functionally, specifically methylates the guanine in position 1207 of 16S rRNA in the 30S particle. The polypeptide is Ribosomal RNA small subunit methyltransferase C (Escherichia coli (strain SMS-3-5 / SECEC)).